The following is a 129-amino-acid chain: MSIPNDLKYTKSHEWVRLEDDGTATIGITQHAQELLGDMVFVETPAVGRQLKQGDECAVVESVKAAADVYAPITGEVTAANPELASAPEKINQDAYAAWLFRLKPANTADLEKLLDSAGYQKLLESEDH.

Residues 23–104 (TATIGITQHA…AYAAWLFRLK (82 aa)) form the Lipoyl-binding domain. Position 64 is an N6-lipoyllysine (lysine 64).

It belongs to the GcvH family. The glycine cleavage system is composed of four proteins: P, T, L and H. It depends on (R)-lipoate as a cofactor.

The glycine cleavage system catalyzes the degradation of glycine. The H protein shuttles the methylamine group of glycine from the P protein to the T protein. The sequence is that of Glycine cleavage system H protein from Nitrosospira multiformis (strain ATCC 25196 / NCIMB 11849 / C 71).